A 297-amino-acid chain; its full sequence is 4-diphosphocytidyl-2-C-methyl-D-erythritol kinase (297 aa).

Active-site residues include Lys6 and Asp144.

Belongs to the GHMP kinase family. IspE subfamily.

It carries out the reaction 4-CDP-2-C-methyl-D-erythritol + ATP = 4-CDP-2-C-methyl-D-erythritol 2-phosphate + ADP + H(+). It participates in isoprenoid biosynthesis; isopentenyl diphosphate biosynthesis via DXP pathway; isopentenyl diphosphate from 1-deoxy-D-xylulose 5-phosphate: step 3/6. Its function is as follows. Catalyzes the phosphorylation of the position 2 hydroxy group of 4-diphosphocytidyl-2C-methyl-D-erythritol. This is 4-diphosphocytidyl-2-C-methyl-D-erythritol kinase from Leptospira interrogans serogroup Icterohaemorrhagiae serovar copenhageni (strain Fiocruz L1-130).